Consider the following 819-residue polypeptide: Leucine--tRNA ligase (819 aa).

The short motif at 40–51 (PYPSGAGLHVGH) is the 'HIGH' region element. Residues 600 to 604 (KMSKS) carry the 'KMSKS' region motif. Residue Lys603 coordinates ATP.

It belongs to the class-I aminoacyl-tRNA synthetase family.

The protein localises to the cytoplasm. The catalysed reaction is tRNA(Leu) + L-leucine + ATP = L-leucyl-tRNA(Leu) + AMP + diphosphate. In Chlamydia trachomatis serovar L2 (strain ATCC VR-902B / DSM 19102 / 434/Bu), this protein is Leucine--tRNA ligase.